The chain runs to 365 residues: tRNA-specific 2-thiouridylase MnmA (365 aa).

Residues 14–21 and leucine 40 each bind ATP; that span reads AMSGGVDS. The active-site Nucleophile is cysteine 108. Cysteine 108 and cysteine 204 are joined by a disulfide. Glycine 132 is an ATP binding site. The tract at residues 154-156 is interaction with tRNA; sequence KDQ. The active-site Cysteine persulfide intermediate is cysteine 204.

Belongs to the MnmA/TRMU family.

The protein localises to the cytoplasm. The enzyme catalyses S-sulfanyl-L-cysteinyl-[protein] + uridine(34) in tRNA + AH2 + ATP = 2-thiouridine(34) in tRNA + L-cysteinyl-[protein] + A + AMP + diphosphate + H(+). Its function is as follows. Catalyzes the 2-thiolation of uridine at the wobble position (U34) of tRNA, leading to the formation of s(2)U34. The chain is tRNA-specific 2-thiouridylase MnmA from Rickettsia africae (strain ESF-5).